Reading from the N-terminus, the 430-residue chain is C4-dicarboxylate transport protein (430 aa).

The next 9 membrane-spanning stretches (helical) occupy residues 8 to 28 (SLYFQVLTAITLGVLLGHFYP), 44 to 64 (LIKMIIAPVIFCTVVTGIAGM), 76 to 96 (IALLYFEIVSTIALLIGLVIV), 144 to 164 (AFASGNILQVLLFAVLFGFAL), 184 to 204 (VIFGIINMIMRLAPIGAFGAM), 222 to 242 (LIICFYITCVLFVVVVLGSIA), 289 to 309 (VVGLVIPTGYSFNLDGTSIYL), 326 to 346 (VIHQVTLLVVLLLSSKGAAGV), and 352 to 372 (IVLAATISAVGHLPLAGLALI).

Belongs to the dicarboxylate/amino acid:cation symporter (DAACS) (TC 2.A.23) family.

The protein resides in the cell inner membrane. Functionally, responsible for the transport of dicarboxylates such as succinate, fumarate, and malate from the periplasm across the membrane. The sequence is that of C4-dicarboxylate transport protein from Yersinia enterocolitica serotype O:8 / biotype 1B (strain NCTC 13174 / 8081).